We begin with the raw amino-acid sequence, 191 residues long: Putative manganese efflux pump MntP (191 aa).

Helical transmembrane passes span 3–23 (PISI…AAIG), 37–57 (LRAG…GWLL), 65–85 (VEAF…IHMI), 107–129 (WKLA…GLAF), 144–164 (CTLT…SMVG), and 169–189 (IIGG…HLHG).

It belongs to the MntP (TC 9.B.29) family.

Its subcellular location is the cell inner membrane. Functionally, probably functions as a manganese efflux pump. This Stenotrophomonas maltophilia (strain K279a) protein is Putative manganese efflux pump MntP.